Consider the following 220-residue polypeptide: Fructose-6-phosphate aldolase (220 aa).

The Schiff-base intermediate with substrate role is filled by Lys85.

This sequence belongs to the transaldolase family. Type 3A subfamily. As to quaternary structure, homodecamer.

It localises to the cytoplasm. The catalysed reaction is beta-D-fructose 6-phosphate = dihydroxyacetone + D-glyceraldehyde 3-phosphate. Functionally, catalyzes the reversible formation of fructose 6-phosphate from dihydroxyacetone and D-glyceraldehyde 3-phosphate via an aldolization reaction. The protein is Fructose-6-phosphate aldolase of Salmonella typhi.